We begin with the raw amino-acid sequence, 349 residues long: Dipeptide transport ATP-binding protein DppD (349 aa).

One can recognise an ABC transporter domain in the interval 7–258 (LEVKNLHVNF…PQHPYTWGLL (252 aa)). 43 to 50 (GESGSGKS) is an ATP binding site.

It belongs to the ABC transporter superfamily. In terms of assembly, the complex is composed of two ATP-binding proteins (DppD and DppF), two transmembrane proteins (DppB and DppC) and a solute-binding protein (DppA).

It localises to the cell membrane. It carries out the reaction a dipeptide(out) + ATP + H2O = a dipeptide(in) + ADP + phosphate + H(+). Functionally, part of the ABC transporter DppABCDF involved in dipeptide transport. Responsible for energy coupling to the transport system. The polypeptide is Dipeptide transport ATP-binding protein DppD (Lactococcus lactis subsp. cremoris (strain MG1363)).